Reading from the N-terminus, the 423-residue chain is UDP-N-acetylglucosamine 1-carboxyvinyltransferase 2 (423 aa).

23 to 24 provides a ligand contact to phosphoenolpyruvate; that stretch reads KN. UDP-N-acetyl-alpha-D-glucosamine is bound at residue R96. The active-site Proton donor is C120. The residue at position 120 (C120) is a 2-(S-cysteinyl)pyruvic acid O-phosphothioketal. UDP-N-acetyl-alpha-D-glucosamine contacts are provided by residues 125–129, D309, and V331; that span reads RPIDL.

It belongs to the EPSP synthase family. MurA subfamily.

The protein localises to the cytoplasm. It catalyses the reaction phosphoenolpyruvate + UDP-N-acetyl-alpha-D-glucosamine = UDP-N-acetyl-3-O-(1-carboxyvinyl)-alpha-D-glucosamine + phosphate. The protein operates within cell wall biogenesis; peptidoglycan biosynthesis. Cell wall formation. Adds enolpyruvyl to UDP-N-acetylglucosamine. This chain is UDP-N-acetylglucosamine 1-carboxyvinyltransferase 2, found in Streptococcus agalactiae serotype III (strain NEM316).